A 52-amino-acid polypeptide reads, in one-letter code: Thiocillin (52 aa).

A propeptide spanning residues 1–38 (MSEIKKALNTLEIEDFDAIEMVDVDAMPENEALEIMGA) is cleaved from the precursor. Residues 39-40 (SC) constitute a cross-link (thiazole-4-carboxylic acid (Ser-Cys)). A cross-link (pyridine-2,5-dicarboxylic acid (Ser-Cys) (with S-48)) is located at residues 39–47 (SCTTCVCTC). A cross-link (pyridine-2,5-dicarboxylic acid (Ser-Ser) (with C-47)) is located at residues 39–48 (SCTTCVCTCS). Thr-42 is subject to (Z)-2,3-didehydrobutyrine. Positions 42–43 (TC) form a cross-link, thiazole-4-carboxylic acid (Thr-Cys). The residue at position 44 (Val-44) is a 3-hydroxyvaline (Val); partial. A cross-link (thiazole-4-carboxylic acid (Val-Cys)) is located at residues 44 to 45 (VC). Thr-46 bears the O-methylthreonine; partial mark. A cross-link (thiazole-4-carboxylic acid (Thr-Cys)) is located at residues 46–47 (TC). A cross-link (thiazole-4-carboxylic acid (Ser-Cys)) is located at residues 48-49 (SC). The segment at residues 49-50 (CC) is a cross-link (thiazole-4-carboxylic acid (Cys-Cys)). At Thr-51 the chain carries (Z)-2,3-didehydrobutyrine. Thr-52 carries the 1-amino-2-propanone; alternate modification. Thr-52 carries the decarboxylated threonine; alternate modification.

It belongs to the thiocillin family. In terms of processing, maturation of thiazole and oxazole containing antibiotics involves the enzymatic condensation of a Cys, Ser or Thr with the alpha-carbonyl of the preceding amino acid to form a thioether or ether bond, then dehydration to form a double bond with the alpha-amino nitrogen. Thiazoline or oxazoline ring are dehydrogenated to form thiazole or oxazole rings. Maturation of pyridinyl containing antibiotics involves the cross-linking of a Ser and a Cys-Ser pair usually separated by 7 or 8 residues along the peptide chain. The Ser residues are dehydrated to didehydroalanines, then bonded between their beta carbons. The alpha carbonyl of the Cys condenses with alpha carbon of the first Ser to form a pyridinyl ring. The ring may be multiply dehydrogenated to form a pyridine ring with loss of the amino nitrogen of the first Ser. Post-translationally, the 8 possible modification isomers, differing in the presence of modifications at three positions, have been characterized in PubMed:19196969. Val-44 is modified to 3-hydroxyvaline in forms thiocillin I, thiocillin II, YM-266183, and YM-266184. Thr-46 is modified to O-methylthreonine in forms thiocillin II, thiocillin III, thiocillin IV, and YM-266184. Thr-52 is decarboxylated to (R)-1-aminopropan-2-ol in forms micrococcin P1, thiocillin I, thiocillin II, and thiocillin III. Thr-52 is decarboxylated and oxidized to 1-amino-2-propanone in forms micrococcin P2, YM-266183, YM-266184. and thiocillin IV. In terms of processing, the structure of 2,3-didehydrobutyrines is not discussed in PubMed:19196969. However, in Fig. 3 the residues are diagrammed as Z-isomers.

It localises to the secreted. Its function is as follows. Has bacteriocidal activity against Gram-positive bacteria, but not against Gram-negative bacteria. Inhibits bacterial protein biosynthesis by acting on the elongation factor Tu (EF-Tu). The polypeptide is Thiocillin (Bacillus cereus (strain ATCC 14579 / DSM 31 / CCUG 7414 / JCM 2152 / NBRC 15305 / NCIMB 9373 / NCTC 2599 / NRRL B-3711)).